Consider the following 238-residue polypeptide: Thiamine import ATP-binding protein ThiQ (238 aa).

The 229-residue stretch at 2–230 folds into the ABC transporter domain; the sequence is LALDKVRYEY…HPHPELAQFV (229 aa). 32-39 contributes to the ATP binding site; that stretch reads GPSGAGKS.

This sequence belongs to the ABC transporter superfamily. Thiamine importer (TC 3.A.1.19.1) family. The complex is composed of two ATP-binding proteins (ThiQ), two transmembrane proteins (ThiP) and a solute-binding protein (ThiB).

The protein resides in the cell inner membrane. It catalyses the reaction thiamine(out) + ATP + H2O = thiamine(in) + ADP + phosphate + H(+). In terms of biological role, part of the ABC transporter complex ThiBPQ involved in thiamine import. Responsible for energy coupling to the transport system. The protein is Thiamine import ATP-binding protein ThiQ of Vibrio cholerae serotype O1 (strain ATCC 39315 / El Tor Inaba N16961).